The primary structure comprises 510 residues: ATP synthase subunit alpha (510 aa).

169 to 176 (GDRQTGKT) contributes to the ATP binding site.

This sequence belongs to the ATPase alpha/beta chains family. F-type ATPases have 2 components, CF(1) - the catalytic core - and CF(0) - the membrane proton channel. CF(1) has five subunits: alpha(3), beta(3), gamma(1), delta(1), epsilon(1). CF(0) has four main subunits: a(1), b(1), b'(1) and c(9-12).

The protein localises to the cell inner membrane. It carries out the reaction ATP + H2O + 4 H(+)(in) = ADP + phosphate + 5 H(+)(out). Functionally, produces ATP from ADP in the presence of a proton gradient across the membrane. The alpha chain is a regulatory subunit. This Rhodospirillum rubrum (strain ATCC 11170 / ATH 1.1.1 / DSM 467 / LMG 4362 / NCIMB 8255 / S1) protein is ATP synthase subunit alpha.